Here is a 264-residue protein sequence, read N- to C-terminus: 3-methyl-2-oxobutanoate hydroxymethyltransferase (264 aa).

Residues Asp-45 and Asp-84 each coordinate Mg(2+). 3-methyl-2-oxobutanoate is bound by residues 45-46 (DS), Asp-84, and Lys-112. Glu-114 contributes to the Mg(2+) binding site. Glu-181 serves as the catalytic Proton acceptor.

Belongs to the PanB family. In terms of assembly, homodecamer; pentamer of dimers. Mg(2+) serves as cofactor.

It is found in the cytoplasm. It carries out the reaction 3-methyl-2-oxobutanoate + (6R)-5,10-methylene-5,6,7,8-tetrahydrofolate + H2O = 2-dehydropantoate + (6S)-5,6,7,8-tetrahydrofolate. Its pathway is cofactor biosynthesis; (R)-pantothenate biosynthesis; (R)-pantoate from 3-methyl-2-oxobutanoate: step 1/2. Functionally, catalyzes the reversible reaction in which hydroxymethyl group from 5,10-methylenetetrahydrofolate is transferred onto alpha-ketoisovalerate to form ketopantoate. The polypeptide is 3-methyl-2-oxobutanoate hydroxymethyltransferase (Shewanella sp. (strain MR-7)).